Consider the following 97-residue polypeptide: MSLLDAHIPQLIASEANFGAKAALMRSTIAQAEQAAMSSQAFHMGEASAAFQAAHARFVEVSAKVNALLDIAQLNIGDAASSYVAQDAAAASTYTGI.

It belongs to the WXG100 family. CFP-10 subfamily. Forms a tight 1:1 complex with EsxH.

It is found in the secreted. This is ESAT-6-like protein EsxG from Mycolicibacterium smegmatis (strain ATCC 700084 / mc(2)155) (Mycobacterium smegmatis).